A 77-amino-acid polypeptide reads, in one-letter code: Acyl carrier protein (77 aa).

The Carrier domain occupies alanine 2–glutamine 77. Serine 37 carries the post-translational modification O-(pantetheine 4'-phosphoryl)serine.

It belongs to the acyl carrier protein (ACP) family. 4'-phosphopantetheine is transferred from CoA to a specific serine of apo-ACP by AcpS. This modification is essential for activity because fatty acids are bound in thioester linkage to the sulfhydryl of the prosthetic group.

The protein resides in the cytoplasm. The protein operates within lipid metabolism; fatty acid biosynthesis. Carrier of the growing fatty acid chain in fatty acid biosynthesis. The protein is Acyl carrier protein of Bacillus licheniformis (strain ATCC 14580 / DSM 13 / JCM 2505 / CCUG 7422 / NBRC 12200 / NCIMB 9375 / NCTC 10341 / NRRL NRS-1264 / Gibson 46).